A 537-amino-acid chain; its full sequence is Putative cysteine ligase BshC (537 aa).

The stretch at 383–451 (MERTQKLLKQ…EVKENQDNFN (69 aa)) forms a coiled coil.

The protein belongs to the BshC family.

Involved in bacillithiol (BSH) biosynthesis. May catalyze the last step of the pathway, the addition of cysteine to glucosamine malate (GlcN-Mal) to generate BSH. This is Putative cysteine ligase BshC from Staphylococcus haemolyticus (strain JCSC1435).